A 192-amino-acid chain; its full sequence is Ciliary microtubule inner protein 3 (192 aa).

Residues 24 to 108 are disordered; sequence RAGAEGGPSL…SGQKVKAPHR (85 aa). The span at 55–64 shows a compositional bias: basic residues; that stretch reads APRRPPRPRT.

It belongs to the CIMIP3-like family. As to expression, detected in the sperm flagellum (at protein level).

It localises to the cytoplasm. The protein localises to the cytoskeleton. The protein resides in the flagellum axoneme. The polypeptide is Ciliary microtubule inner protein 3 (Bos taurus (Bovine)).